The chain runs to 956 residues: Protein translocase subunit SecA (956 aa).

ATP is bound by residues Q87, 105-109 (GEGKT), and D524. Zn(2+)-binding residues include C940, C942, C951, and H952.

The protein belongs to the SecA family. As to quaternary structure, monomer and homodimer. Part of the essential Sec protein translocation apparatus which comprises SecA, SecYEG and auxiliary proteins SecDF-YajC and YidC. Requires Zn(2+) as cofactor.

Its subcellular location is the cell inner membrane. The protein localises to the cytoplasm. It carries out the reaction ATP + H2O + cellular proteinSide 1 = ADP + phosphate + cellular proteinSide 2.. Functionally, part of the Sec protein translocase complex. Interacts with the SecYEG preprotein conducting channel. Has a central role in coupling the hydrolysis of ATP to the transfer of proteins into and across the cell membrane, serving both as a receptor for the preprotein-SecB complex and as an ATP-driven molecular motor driving the stepwise translocation of polypeptide chains across the membrane. In Beijerinckia indica subsp. indica (strain ATCC 9039 / DSM 1715 / NCIMB 8712), this protein is Protein translocase subunit SecA.